Consider the following 268-residue polypeptide: 3-methyl-2-oxobutanoate hydroxymethyltransferase (268 aa).

Positions 44 and 83 each coordinate Mg(2+). 3-methyl-2-oxobutanoate is bound by residues aspartate 44–serine 45, aspartate 83, and lysine 113. A Mg(2+)-binding site is contributed by glutamate 115. Catalysis depends on glutamate 183, which acts as the Proton acceptor.

This sequence belongs to the PanB family. In terms of assembly, homodecamer; pentamer of dimers. Requires Mg(2+) as cofactor.

The protein resides in the cytoplasm. It catalyses the reaction 3-methyl-2-oxobutanoate + (6R)-5,10-methylene-5,6,7,8-tetrahydrofolate + H2O = 2-dehydropantoate + (6S)-5,6,7,8-tetrahydrofolate. It participates in cofactor biosynthesis; (R)-pantothenate biosynthesis; (R)-pantoate from 3-methyl-2-oxobutanoate: step 1/2. In terms of biological role, catalyzes the reversible reaction in which hydroxymethyl group from 5,10-methylenetetrahydrofolate is transferred onto alpha-ketoisovalerate to form ketopantoate. This chain is 3-methyl-2-oxobutanoate hydroxymethyltransferase, found in Leptospira biflexa serovar Patoc (strain Patoc 1 / Ames).